The chain runs to 448 residues: Probable glycine dehydrogenase (decarboxylating) subunit 1 (448 aa).

This sequence belongs to the GcvP family. N-terminal subunit subfamily. As to quaternary structure, the glycine cleavage system is composed of four proteins: P, T, L and H. In this organism, the P 'protein' is a heterodimer of two subunits.

The enzyme catalyses N(6)-[(R)-lipoyl]-L-lysyl-[glycine-cleavage complex H protein] + glycine + H(+) = N(6)-[(R)-S(8)-aminomethyldihydrolipoyl]-L-lysyl-[glycine-cleavage complex H protein] + CO2. In terms of biological role, the glycine cleavage system catalyzes the degradation of glycine. The P protein binds the alpha-amino group of glycine through its pyridoxal phosphate cofactor; CO(2) is released and the remaining methylamine moiety is then transferred to the lipoamide cofactor of the H protein. This Shouchella clausii (strain KSM-K16) (Alkalihalobacillus clausii) protein is Probable glycine dehydrogenase (decarboxylating) subunit 1.